A 542-amino-acid chain; its full sequence is Chaperonin GroEL (542 aa).

ATP contacts are provided by residues 29–32 (TLGP), 86–90 (DGTTT), Gly413, 476–478 (NAA), and Asp492. The segment at 522 to 542 (PDENGPAAVPDMGMGGMGGMM) is disordered.

The protein belongs to the chaperonin (HSP60) family. As to quaternary structure, forms a cylinder of 14 subunits composed of two heptameric rings stacked back-to-back. Interacts with the co-chaperonin GroES.

It is found in the cytoplasm. The enzyme catalyses ATP + H2O + a folded polypeptide = ADP + phosphate + an unfolded polypeptide.. Its function is as follows. Together with its co-chaperonin GroES, plays an essential role in assisting protein folding. The GroEL-GroES system forms a nano-cage that allows encapsulation of the non-native substrate proteins and provides a physical environment optimized to promote and accelerate protein folding. The sequence is that of Chaperonin GroEL from Listeria monocytogenes serotype 4a (strain HCC23).